A 247-amino-acid chain; its full sequence is Chymase (247 aa).

An N-terminal signal peptide occupies residues 1–19 (MLLLPLPLLLLFLCSRAEA). Residues 20–21 (GE) constitute a propeptide, activation peptide. The Peptidase S1 domain maps to 22 to 245 (IIGGTECKPH…YRPWINKILQ (224 aa)). Cys-51 and Cys-67 form a disulfide bridge. His-66 (charge relay system) is an active-site residue. Asn-80 and Asn-103 each carry an N-linked (GlcNAc...) asparagine glycan. The active-site Charge relay system is the Asp-110. 2 cysteine pairs are disulfide-bonded: Cys-144–Cys-209 and Cys-175–Cys-188. The Charge relay system role is filled by Ser-203.

It belongs to the peptidase S1 family. Granzyme subfamily.

It localises to the secreted. The protein localises to the cytoplasmic granule. It carries out the reaction Preferential cleavage: Phe-|-Xaa &gt; Tyr-|-Xaa &gt; Trp-|-Xaa &gt; Leu-|-Xaa.. Major secreted protease of mast cells with suspected roles in vasoactive peptide generation, extracellular matrix degradation, and regulation of gland secretion. The chain is Chymase (CMA1) from Papio hamadryas (Hamadryas baboon).